The following is a 222-amino-acid chain: MARGKVQLRRIENPVHRQVTFCKRRAGLLKKARELSILCEADIGIIIFSAHGKLYDLATTGTMEELIERYKSASGEQANACGDQRMDPKQEAMVLKQEINLLQKGLRYIYGNRANEHMTVEELNALERYLEIWMYNIRSAKMQIMIQEIQALKSKEGMLKAANEILQEKIVEQNGLIDVGMMVADQQNGHFSTVPLLEEITNPLTILSGYSTCRGSEMGYSF.

The 61-residue stretch at 1 to 61 folds into the MADS-box domain; sequence MARGKVQLRR…GKLYDLATTG (61 aa). One can recognise a K-box domain in the interval 85–176; sequence RMDPKQEAMV…QEKIVEQNGL (92 aa).

The protein localises to the nucleus. Functionally, probable transcription factor. This is MADS-box transcription factor 26 (MADS26) from Oryza sativa subsp. indica (Rice).